The following is a 30-amino-acid chain: Photosystem I reaction center subunit XII (30 aa).

A helical transmembrane segment spans residues 7–26; it reads IFVALLFALVSAVLAIRLGT.

It belongs to the PsaM family.

It is found in the plastid. Its subcellular location is the chloroplast thylakoid membrane. This chain is Photosystem I reaction center subunit XII, found in Gracilaria tenuistipitata var. liui (Red alga).